The primary structure comprises 105 residues: MKVAGVFLLLSLALLCFFSGEFSQGGQDKRGWITRSEGRFPGKGVLRHRLFQINCGEFRDPKVFCTRESDPLCGSDGQTYGNKCAFCKALEKSSGKINLKHRGKC.

Residues 1 to 23 (MKVAGVFLLLSLALLCFFSGEFS) form the signal peptide. Glutamine 24 is subject to Pyrrolidone carboxylic acid. Residues 49-105 (RLFQINCGEFRDPKVFCTRESDPLCGSDGQTYGNKCAFCKALEKSSGKINLKHRGKC) form the Kazal-like domain. Disulfide bonds link cysteine 55/cysteine 87, cysteine 65/cysteine 84, and cysteine 73/cysteine 105.

The protein resides in the secreted. In terms of biological role, serine protease inhibitor selective for kallikreins. Efficiently inhibits KLK4, KLK5, KLK6, KLK7, KLK12, KLK13 and KLK14. Doesn't inhibit KLK8. The chain is Serine protease inhibitor Kazal-type 6 (Spink6) from Rattus norvegicus (Rat).